Reading from the N-terminus, the 262-residue chain is Zinc import ATP-binding protein ZnuC (262 aa).

An ABC transporter domain is found at 5–220 (IELQDICVDF…PSYLAMFGHR (216 aa)). 37 to 44 (GPNGAGKS) is a binding site for ATP.

Belongs to the ABC transporter superfamily. Zinc importer (TC 3.A.1.15.5) family. As to quaternary structure, the complex is composed of two ATP-binding proteins (ZnuC), two transmembrane proteins (ZnuB) and a solute-binding protein (ZnuA).

Its subcellular location is the cell inner membrane. The enzyme catalyses Zn(2+)(out) + ATP(in) + H2O(in) = Zn(2+)(in) + ADP(in) + phosphate(in) + H(+)(in). In terms of biological role, part of the ABC transporter complex ZnuABC involved in zinc import. Responsible for energy coupling to the transport system. In Vibrio cholerae serotype O1 (strain ATCC 39315 / El Tor Inaba N16961), this protein is Zinc import ATP-binding protein ZnuC.